Reading from the N-terminus, the 349-residue chain is Glycerol-3-phosphate dehydrogenase [NAD(+)], cytoplasmic (349 aa).

Residues 10–15 (GSGDWG), Lys-120, and Ala-153 contribute to the NAD(+) site. Lys-120 is a substrate binding site. Ser-154 bears the Phosphoserine mark. Lys-204 (proton acceptor) is an active-site residue. Residue Arg-269 participates in NAD(+) binding. Position 269–270 (269–270 (RN)) interacts with substrate. Lys-289 bears the N6-succinyllysine mark. Residues Lys-296 and Gln-298 each coordinate NAD(+). Position 326 is a phosphotyrosine (Tyr-326).

This sequence belongs to the NAD-dependent glycerol-3-phosphate dehydrogenase family. In terms of assembly, homodimer.

Its subcellular location is the cytoplasm. It catalyses the reaction sn-glycerol 3-phosphate + NAD(+) = dihydroxyacetone phosphate + NADH + H(+). Its function is as follows. Has glycerol-3-phosphate dehydrogenase activity. This is Glycerol-3-phosphate dehydrogenase [NAD(+)], cytoplasmic (GPD1) from Oryctolagus cuniculus (Rabbit).